The following is a 556-amino-acid chain: TNF receptor-associated factor 6-A (556 aa).

The RING-type; degenerate zinc finger occupies 72–111 (CPICLMALREAVQTPCGHRFCKACILKSLRNAGHKCPVDN). 2 consecutive TRAF-type zinc fingers follow at residues 148–204 (RHLE…EDKS) and 205–261 (GHEL…HNLA). In terms of domain architecture, MATH spans 384–533 (NGVFIWRIKG…NDTLLVRCSV (150 aa)).

It belongs to the TNF receptor-associated factor family. A subfamily. In terms of assembly, homotrimer. Homooligomer. Interacts with tifa. Highly expressed in ovary and moderately expressed in kidney, spleen, stomach, colon and testis.

Its subcellular location is the cytoplasm. It localises to the cell cortex. The protein localises to the nucleus. It is found in the lipid droplet. It carries out the reaction S-ubiquitinyl-[E2 ubiquitin-conjugating enzyme]-L-cysteine + [acceptor protein]-L-lysine = [E2 ubiquitin-conjugating enzyme]-L-cysteine + N(6)-ubiquitinyl-[acceptor protein]-L-lysine.. It functions in the pathway protein modification; protein ubiquitination. E3 ubiquitin ligase that, together with UBE2N and UBE2V1, mediates the synthesis of 'Lys-63'-linked-polyubiquitin chains conjugated to proteins, such as IKBKG, IRAK1, AKT1 and AKT2. Also mediates ubiquitination of free/unanchored polyubiquitin chain that leads to MAP3K7 activation. The chain is TNF receptor-associated factor 6-A (traf6-a) from Xenopus laevis (African clawed frog).